Consider the following 451-residue polypeptide: Bifunctional protein GlmU (451 aa).

The pyrophosphorylase stretch occupies residues 1–226; it reads MVAVAILAAG…YLEISGINDR (226 aa). Residues 7 to 10, Lys21, Gln73, and 78 to 79 each bind UDP-N-acetyl-alpha-D-glucosamine; these read LAAG and GT. Asp103 is a binding site for Mg(2+). Gly140, Glu155, Asn170, and Asn224 together coordinate UDP-N-acetyl-alpha-D-glucosamine. Mg(2+) is bound at residue Asn224. The linker stretch occupies residues 227–247; sequence KQLATAYDILQNRIKDYWMRA. An N-acetyltransferase region spans residues 248-451; it reads GVTLIDPDSI…ISGWRMKTDD (204 aa). 2 residues coordinate UDP-N-acetyl-alpha-D-glucosamine: Arg329 and Lys347. The active-site Proton acceptor is the His359. UDP-N-acetyl-alpha-D-glucosamine is bound by residues Tyr362 and Asn373. Residues Ala376, 382-383, Ala419, and Arg436 each bind acetyl-CoA; that span reads NY.

It in the N-terminal section; belongs to the N-acetylglucosamine-1-phosphate uridyltransferase family. This sequence in the C-terminal section; belongs to the transferase hexapeptide repeat family. As to quaternary structure, homotrimer. It depends on Mg(2+) as a cofactor.

It localises to the cytoplasm. It carries out the reaction alpha-D-glucosamine 1-phosphate + acetyl-CoA = N-acetyl-alpha-D-glucosamine 1-phosphate + CoA + H(+). The catalysed reaction is N-acetyl-alpha-D-glucosamine 1-phosphate + UTP + H(+) = UDP-N-acetyl-alpha-D-glucosamine + diphosphate. It participates in nucleotide-sugar biosynthesis; UDP-N-acetyl-alpha-D-glucosamine biosynthesis; N-acetyl-alpha-D-glucosamine 1-phosphate from alpha-D-glucosamine 6-phosphate (route II): step 2/2. The protein operates within nucleotide-sugar biosynthesis; UDP-N-acetyl-alpha-D-glucosamine biosynthesis; UDP-N-acetyl-alpha-D-glucosamine from N-acetyl-alpha-D-glucosamine 1-phosphate: step 1/1. Its pathway is bacterial outer membrane biogenesis; LPS lipid A biosynthesis. Functionally, catalyzes the last two sequential reactions in the de novo biosynthetic pathway for UDP-N-acetylglucosamine (UDP-GlcNAc). The C-terminal domain catalyzes the transfer of acetyl group from acetyl coenzyme A to glucosamine-1-phosphate (GlcN-1-P) to produce N-acetylglucosamine-1-phosphate (GlcNAc-1-P), which is converted into UDP-GlcNAc by the transfer of uridine 5-monophosphate (from uridine 5-triphosphate), a reaction catalyzed by the N-terminal domain. The sequence is that of Bifunctional protein GlmU from Gloeothece citriformis (strain PCC 7424) (Cyanothece sp. (strain PCC 7424)).